The following is a 305-amino-acid chain: GMP synthase [glutamine-hydrolyzing] subunit B (305 aa).

The GMPS ATP-PPase domain maps to 2–185; that stretch reads VETEEFIAEA…LGLEEVISER (184 aa). 29–35 contributes to the ATP binding site; the sequence is SGGVDSS.

Heterodimer composed of a glutamine amidotransferase subunit (A) and a GMP-binding subunit (B).

The enzyme catalyses XMP + L-glutamine + ATP + H2O = GMP + L-glutamate + AMP + diphosphate + 2 H(+). It participates in purine metabolism; GMP biosynthesis; GMP from XMP (L-Gln route): step 1/1. Functionally, catalyzes the synthesis of GMP from XMP. In Halorubrum lacusprofundi (strain ATCC 49239 / DSM 5036 / JCM 8891 / ACAM 34), this protein is GMP synthase [glutamine-hydrolyzing] subunit B.